The primary structure comprises 628 residues: uncharacterized protein (628 aa).

It belongs to the IucA/IucC family.

This is an uncharacterized protein from Sinorhizobium fredii (strain NBRC 101917 / NGR234).